The following is a 1904-amino-acid chain: MLGGVGGRHMSTRRRGSSPLVRGGAGLTGYAGPGASGNSNDVAAIPPDMQRYAGRRRRAVTTSDHKSCALVQTRIKLGDIMLAAQEAAQRDPGYASQYRRRPRLAGLSFGDWTSFGGEVPGLVDMAPGRDQGGGAGGGGGGGKGTTSLFILSEDNCIRKHTRFIIEWPPFEYAVLLTIIANCVVLALEEHLPKQDKTILAQKLEATEIYFLGIFCVEASLKILALGFVLHRGSYLRNIWNIMDFFVVVTGFITAFSQGIELDMDLRTLRAIRVLRPLKLVSGIPSLQVVLKSIIKAMAPLLQIGLLVLFAIVIFAIIGLEFYSGTLHKTCYSIRDINVIVKEGEQASPCNTDNKSEAPFGAHVCDANISTCMDHWEGPNFGITSFDNIGFAMLTVFQCITMEGWTAILYWTNDALGSTYNWIYFIPLIVLGSFFMLNLVLGVLSGEFAKEREKVENRQSFLKLRRQQQLEHELYCYLNWICKAEEVILAEERTTEEEKKHILEGRKRAEAKKKKLGKSKSTDTEEEEGDDDQDDGELSSSTKEKGPCKQFWLAEKRFRYWIRKSVKSQKFYWFVIVLVFFNTVCVAVEHYGQPQWLTDFLYFAEFVFLALFMLEMFIKVYALGPRTYFDSSFNRFDCVVISGSIFEVIWSEVKSGSFGLSVLRALRLLRIFKVTKYWKSLRNLVISLLSSMRSIISLLFLLFLFILIFALLGMQLFGGQFNFDSGTPPTNFNTFPIALLTVFQILTGEDWNEVMYQGIESQGGHKKGMIYSLYFIVLVLFGNYTLLNVFLAIAVDNLANAQELSAAENEEEEEDKQKQAQEIEKEIQSLQNPKDGGAPKVEICPPNGKGGKQSSEEEKKQDEDDDTGPKPMLPYSSMFILSPTNPVRRAAHWVVNLRYFDFFIMVVISLSSIALAAEDPVWEDSPRNEVLNYFDYAFTGVFTVEMILKIIDLGIILHPGSYLREFWNIMDAVVVICAAVSFAFDMTGSSAGQNLSTIKSLRVLRVLRPLKTIKRVPKLKAVFDCVVNSLKNVINILIVYILFQFIFAVIAVQLFNGKFFYCSDESKYTQQDCQGQYFVFEDGALLPEPKKREWQSQFFHYDNVMAAMLTLFAVQTGEGWPQILQNSMAATYEDKGPIQNFRIEMSIFYIVYFIVFPFFFVNIFVALIIITFQEQGEAELQDGEIDKNQKSCIDFTIQARPLERYMPKERNSVKYKIWRIVVSTPFEYFIMGLIVLNTVLLMMKFHRQSDAYKNTLKYMNMCFTGMFTVECILKIAAFGVRNFFKDAWNTFDFITVIGSIVDALVIEFGENFINVGFLRLFRAARLIKLLRQGYTIRILLWTFVQSFKALPYVCLLIAMLFFIYAIIGMQVFGNIALDADTSITKHNNFQSFIQGLMLLFRCATGEAWPNIMLSCVKGRPCDAKAGKQEGGCGSNIAYAYFVSFIFFCSFLMLNLFVAVIMDNFDYLTRDSSILGAHHLDEFVRIWAEYDPNATGKIHYTEMYDMLKNMDPPLGFGNKCPNRLAYKKLIRMNMPVDVDLKVNFTTTLFALIRENLNIKVRRASERNQANEELRDTIRSIWPLQAKKMLDLLIPRNEEIGRGKMTVGKIYVCLLILESWRTTRFGQIESAGQPIMELQDVVVSDSRAGSLESLTHTGKRLHPPVQPVRHPSRSPSLRHSPGRPGYDHHGHYYHEGPGFSDTVSNVVEIQRHTHHPHPSQYNHRHRMRGPWSASTSPARTPSPIHHIDRGRHYGTTSLEQRSRSPSPIGGRQPPHTHQHYHRHHPHQHSYPVLVTRRGRGRRLPPTPNKPSTLQLKPANINFPKLNASPTHGSHIHVPIPAGMQHPPPGQHLPPMQPSHCPLSFEQAVAMGRGGRLLPSPVPNGYKPQPQAKQRTPRHSDSDEDDWC.

The disordered stretch occupies residues 1-45 (MLGGVGGRHMSTRRRGSSPLVRGGAGLTGYAGPGASGNSNDVAAI). Residues 23-35 (GGAGLTGYAGPGA) show a composition bias toward gly residues. The Cytoplasmic portion of the chain corresponds to 30–168 (YAGPGASGNS…KHTRFIIEWP (139 aa)). The I repeat unit spans residues 155 to 447 (NCIRKHTRFI…LVLGVLSGEF (293 aa)). A helical membrane pass occupies residues 169–187 (PFEYAVLLTIIANCVVLAL). Residues 188-205 (EEHLPKQDKTILAQKLEA) lie on the Extracellular side of the membrane. A helical transmembrane segment spans residues 206-225 (TEIYFLGIFCVEASLKILAL). Over 226–237 (GFVLHRGSYLRN) the chain is Cytoplasmic. A helical transmembrane segment spans residues 238–259 (IWNIMDFFVVVTGFITAFSQGI). Residues 260-264 (ELDMD) lie on the Extracellular side of the membrane. A helical membrane pass occupies residues 265–283 (LRTLRAIRVLRPLKLVSGI). Residues 284–302 (PSLQVVLKSIIKAMAPLLQ) lie on the Cytoplasmic side of the membrane. Residues 303 to 322 (IGLLVLFAIVIFAIIGLEFY) traverse the membrane as a helical segment. Topologically, residues 323-419 (SGTLHKTCYS…WTNDALGSTY (97 aa)) are extracellular. N-linked (GlcNAc...) asparagine glycans are attached at residues asparagine 353 and asparagine 367. Residues 420 to 444 (NWIYFIPLIVLGSFFMLNLVLGVLS) traverse the membrane as a helical segment. Over 445–568 (GEFAKEREKV…YWIRKSVKSQ (124 aa)) the chain is Cytoplasmic. A disordered region spans residues 513–543 (KKLGKSKSTDTEEEEGDDDQDDGELSSSTKE). The segment covering 523 to 536 (TEEEEGDDDQDDGE) has biased composition (acidic residues). An II repeat occupies 554-797 (EKRFRYWIRK…VFLAIAVDNL (244 aa)). The chain crosses the membrane as a helical span at residues 569–587 (KFYWFVIVLVFFNTVCVAV). The Extracellular portion of the chain corresponds to 588–602 (EHYGQPQWLTDFLYF). Residues 603–622 (AEFVFLALFMLEMFIKVYAL) form a helical membrane-spanning segment. Over 623–630 (GPRTYFDS) the chain is Cytoplasmic. Residues 631 to 649 (SFNRFDCVVISGSIFEVIW) form a helical membrane-spanning segment. Residues 650-658 (SEVKSGSFG) lie on the Extracellular side of the membrane. A helical membrane pass occupies residues 659–677 (LSVLRALRLLRIFKVTKYW). Residues 678 to 696 (KSLRNLVISLLSSMRSIIS) are Cytoplasmic-facing. Residues 697 to 716 (LLFLLFLFILIFALLGMQLF) traverse the membrane as a helical segment. The Extracellular portion of the chain corresponds to 717–769 (GGQFNFDSGTPPTNFNTFPIALLTVFQILTGEDWNEVMYQGIESQGGHKKGMI). Residues 770 to 794 (YSLYFIVLVLFGNYTLLNVFLAIAV) traverse the membrane as a helical segment. Over 795–895 (DNLANAQELS…VRRAAHWVVN (101 aa)) the chain is Cytoplasmic. The tract at residues 827-869 (QSLQNPKDGGAPKVEICPPNGKGGKQSSEEEKKQDEDDDTGPK) is disordered. The stretch at 890–1177 (AHWVVNLRYF…IITFQEQGEA (288 aa)) is one III repeat. A helical transmembrane segment spans residues 896–914 (LRYFDFFIMVVISLSSIAL). The Extracellular segment spans residues 915-930 (AAEDPVWEDSPRNEVL). A helical transmembrane segment spans residues 931-950 (NYFDYAFTGVFTVEMILKII). Over 951–962 (DLGIILHPGSYL) the chain is Cytoplasmic. Residues 963–981 (REFWNIMDAVVVICAAVSF) traverse the membrane as a helical segment. At 982–994 (AFDMTGSSAGQNL) the chain is on the extracellular side. The N-linked (GlcNAc...) asparagine glycan is linked to asparagine 993. A helical membrane pass occupies residues 995–1013 (STIKSLRVLRVLRPLKTIK). Residues 1014 to 1032 (RVPKLKAVFDCVVNSLKNV) are Cytoplasmic-facing. A helical membrane pass occupies residues 1033–1052 (INILIVYILFQFIFAVIAVQ). Residues 1053-1141 (LFNGKFFYCS…EDKGPIQNFR (89 aa)) are Extracellular-facing. The chain crosses the membrane as a helical span at residues 1142–1166 (IEMSIFYIVYFIVFPFFFVNIFVAL). At 1167–1221 (IIITFQEQGEAELQDGEIDKNQKSCIDFTIQARPLERYMPKERNSVKYKIWRIVV) the chain is on the cytoplasmic side. The IV repeat unit spans residues 1214-1470 (YKIWRIVVST…DNFDYLTRDS (257 aa)). A helical membrane pass occupies residues 1222 to 1250 (STPFEYFIMGLIVLNTVLLMMKFHRQSDA). The Extracellular segment spans residues 1251 to 1255 (YKNTL). Residues 1256-1275 (KYMNMCFTGMFTVECILKIA) traverse the membrane as a helical segment. Residues 1276–1283 (AFGVRNFF) lie on the Cytoplasmic side of the membrane. A helical transmembrane segment spans residues 1284–1302 (KDAWNTFDFITVIGSIVDA). The Extracellular portion of the chain corresponds to 1303–1309 (LVIEFGE). Residues 1310 to 1328 (NFINVGFLRLFRAARLIKL) traverse the membrane as a helical segment. At 1329 to 1347 (LRQGYTIRILLWTFVQSFK) the chain is on the cytoplasmic side. The helical transmembrane segment at 1348-1367 (ALPYVCLLIAMLFFIYAIIG) threads the bilayer. The Extracellular segment spans residues 1368–1431 (MQVFGNIALD…AKAGKQEGGC (64 aa)). Positions 1430–1471 (GCGSNIAYAYFVSFIFFCSFLMLNLFVAVIMDNFDYLTRDSS) are phenylalkylamine binding. Residues 1432-1456 (GSNIAYAYFVSFIFFCSFLMLNLFV) form a helical membrane-spanning segment. The Cytoplasmic portion of the chain corresponds to 1457-1904 (AVIMDNFDYL…HSDSDEDDWC (448 aa)). One can recognise an EF-hand domain in the interval 1476–1511 (HHLDEFVRIWAEYDPNATGKIHYTEMYDMLKNMDPP). Residues aspartate 1489, asparagine 1491, threonine 1493, lysine 1495, and glutamate 1500 each coordinate Ca(2+). Disordered regions lie at residues 1652–1694 (THTG…HEGP), 1710–1788 (THHP…HSYP), and 1870–1904 (GGRL…DDWC). Over residues 1670 to 1681 (RSPSLRHSPGRP) the composition is skewed to low complexity. Basic and acidic residues predominate over residues 1682-1691 (GYDHHGHYYH). Positions 1710-1725 (THHPHPSQYNHRHRMR) are enriched in basic residues. Positions 1727–1740 (PWSASTSPARTPSP) are enriched in low complexity. Over residues 1751 to 1762 (GTTSLEQRSRSP) the composition is skewed to polar residues. A compositionally biased stretch (basic residues) spans 1771–1784 (PHTHQHYHRHHPHQ).

The protein belongs to the calcium channel alpha-1 subunit (TC 1.A.1.11) family. CACNA1I subfamily. As to quaternary structure, interacts with CATSPER1 and CATSPER2, leading to suppress T-type calcium channel activity.

The protein localises to the membrane. In terms of biological role, voltage-sensitive calcium channels (VSCC) mediate the entry of calcium ions into excitable cells and are also involved in a variety of calcium-dependent processes, including muscle contraction, neurotransmitter release, gene expression, cell motility, cell division and cell death. The sequence is that of Voltage-dependent calcium channel type A subunit alpha-1 (CAC) from Apis mellifera (Honeybee).